A 199-amino-acid polypeptide reads, in one-letter code: Glycerol-3-phosphate acyltransferase (199 aa).

A run of 5 helical transmembrane segments spans residues 5-25 (AFLV…VALV), 51-71 (KLGV…VLCA), 79-99 (VFLS…VFLY), 112-132 (VFLG…VAVI), and 153-173 (CAWL…GLVI).

It belongs to the PlsY family. Probably interacts with PlsX.

It is found in the cell inner membrane. The enzyme catalyses an acyl phosphate + sn-glycerol 3-phosphate = a 1-acyl-sn-glycero-3-phosphate + phosphate. The protein operates within lipid metabolism; phospholipid metabolism. Its function is as follows. Catalyzes the transfer of an acyl group from acyl-phosphate (acyl-PO(4)) to glycerol-3-phosphate (G3P) to form lysophosphatidic acid (LPA). This enzyme utilizes acyl-phosphate as fatty acyl donor, but not acyl-CoA or acyl-ACP. This Solidesulfovibrio magneticus (strain ATCC 700980 / DSM 13731 / RS-1) (Desulfovibrio magneticus) protein is Glycerol-3-phosphate acyltransferase.